Here is a 508-residue protein sequence, read N- to C-terminus: p-aminobenzoyl-glutamate transport protein (508 aa).

Transmembrane regions (helical) follow at residues 30–50 (FLLF…LSAF), 85–105 (FSGF…GLAE), 121–139 (VNAR…FSHI), 140–159 (SSDA…FLAV), 164–184 (VAGL…NLLI), 211–231 (IDNW…GGLI), 261–281 (GLRI…LMVI), 303–323 (GIVP…GIAT), 343–363 (MAGF…FNWS), 382–402 (LSGI…CMFI), 405–425 (GSAI…LLGF), 439–459 (SSVL…GFLQ), and 479–499 (LIFL…GLPI).

The protein resides in the cell inner membrane. The catalysed reaction is N-(4-aminobenzoyl)-L-glutamate(in) + H(+)(in) = N-(4-aminobenzoyl)-L-glutamate(out) + H(+)(out). Completely inhibited by 100 nM sodium azide and by the proton ionophore carbonyl cyanide m-chlorophenylhydrazone (CCCP). Is also strongly inhibited by 100 mM potassium fluoride. Its function is as follows. Essential for aminobenzoyl-glutamate utilization. It catalyzes the concentration-dependent uptake of p-aminobenzoyl-glutamate (PABA-GLU) into the cell and allows accumulation of PABA-GLU to a concentration enabling AbgAB to catalyze cleavage into p-aminobenzoate and glutamate. It also seems to increase the sensitivity to low levels of aminobenzoyl-glutamate. May actually serve physiologically as a transporter for some other molecule, perhaps a dipeptide, and that it transports p-aminobenzoyl-glutamate as a secondary activity. The physiological role of abgABT should be clarified. This is p-aminobenzoyl-glutamate transport protein from Escherichia coli (strain K12).